A 150-amino-acid chain; its full sequence is Large ribosomal subunit protein bL9 (150 aa).

Belongs to the bacterial ribosomal protein bL9 family.

Binds to the 23S rRNA. This Corynebacterium glutamicum (strain ATCC 13032 / DSM 20300 / JCM 1318 / BCRC 11384 / CCUG 27702 / LMG 3730 / NBRC 12168 / NCIMB 10025 / NRRL B-2784 / 534) protein is Large ribosomal subunit protein bL9.